The sequence spans 345 residues: Anthranilate phosphoribosyltransferase (345 aa).

Residues Gly-80, 83–84 (GD), Thr-88, 90–93 (NIST), 108–116 (KHGNRSVTS), and Ser-120 each bind 5-phospho-alpha-D-ribose 1-diphosphate. Gly-80 contributes to the anthranilate binding site. Position 92 (Ser-92) interacts with Mg(2+). Asn-111 contributes to the anthranilate binding site. Anthranilate is bound at residue Arg-166. Mg(2+)-binding residues include Asp-229 and Glu-230.

The protein belongs to the anthranilate phosphoribosyltransferase family. In terms of assembly, homodimer. The cofactor is Mg(2+).

It catalyses the reaction N-(5-phospho-beta-D-ribosyl)anthranilate + diphosphate = 5-phospho-alpha-D-ribose 1-diphosphate + anthranilate. It functions in the pathway amino-acid biosynthesis; L-tryptophan biosynthesis; L-tryptophan from chorismate: step 2/5. In terms of biological role, catalyzes the transfer of the phosphoribosyl group of 5-phosphorylribose-1-pyrophosphate (PRPP) to anthranilate to yield N-(5'-phosphoribosyl)-anthranilate (PRA). The sequence is that of Anthranilate phosphoribosyltransferase from Chlorobium phaeobacteroides (strain BS1).